The chain runs to 177 residues: O-acetyl-ADP-ribose deacetylase (177 aa).

One can recognise a Macro domain in the interval 1–175; sequence MKTRIHVVQG…LYERLLTQQG (175 aa). Substrate-binding positions include 11 to 12, asparagine 25, 33 to 35, and 122 to 126; these read DI, GVD, and STGVY. Catalysis depends on aspartate 35, which acts as the Proton acceptor.

It belongs to the MacroD-type family. YmdB subfamily. In terms of assembly, homodimer. Interacts with RNase III.

The catalysed reaction is 3''-O-acetyl-ADP-D-ribose + H2O = ADP-D-ribose + acetate + H(+). The enzyme catalyses 2''-O-acetyl-ADP-D-ribose + H2O = ADP-D-ribose + acetate + H(+). In terms of biological role, deacetylates O-acetyl-ADP ribose to yield ADP-ribose and free acetate. Down-regulates ribonuclease 3 (RNase III) activity. Acts by interacting directly with the region of the ribonuclease that is required for dimerization/activation. This is O-acetyl-ADP-ribose deacetylase from Escherichia coli O157:H7.